The primary structure comprises 223 residues: Neurotrophic factor BDNF precursor form (223 aa).

A signal peptide spans 1–5; it reads SCMKA. Positions 6 to 114 are excised as a propeptide; sequence APMKEVSIRG…AANMSMRVRR (109 aa). An N-linked (GlcNAc...) asparagine glycan is attached at N107. Intrachain disulfides connect C127–C194 and C172–C223.

It belongs to the NGF-beta family.

Its subcellular location is the secreted. Its function is as follows. Promotes the survival of neuronal populations that are all located either in the central nervous system or directly connected to it. The polypeptide is Neurotrophic factor BDNF precursor form (BDNF) (Eryx johnii (Indian red sand boa)).